The following is a 209-amino-acid chain: Thiamine-phosphate synthase (209 aa).

4-amino-2-methyl-5-(diphosphooxymethyl)pyrimidine contacts are provided by residues 36–40 and N68; that span reads QLRDK. The Mg(2+) site is built by D69 and D88. S107 provides a ligand contact to 4-amino-2-methyl-5-(diphosphooxymethyl)pyrimidine. 133–135 provides a ligand contact to 2-[(2R,5Z)-2-carboxy-4-methylthiazol-5(2H)-ylidene]ethyl phosphate; the sequence is TNS. K136 lines the 4-amino-2-methyl-5-(diphosphooxymethyl)pyrimidine pocket. 2-[(2R,5Z)-2-carboxy-4-methylthiazol-5(2H)-ylidene]ethyl phosphate-binding positions include G164 and 184–185; that span reads IT.

It belongs to the thiamine-phosphate synthase family. Mg(2+) is required as a cofactor.

It carries out the reaction 2-[(2R,5Z)-2-carboxy-4-methylthiazol-5(2H)-ylidene]ethyl phosphate + 4-amino-2-methyl-5-(diphosphooxymethyl)pyrimidine + 2 H(+) = thiamine phosphate + CO2 + diphosphate. The catalysed reaction is 2-(2-carboxy-4-methylthiazol-5-yl)ethyl phosphate + 4-amino-2-methyl-5-(diphosphooxymethyl)pyrimidine + 2 H(+) = thiamine phosphate + CO2 + diphosphate. It catalyses the reaction 4-methyl-5-(2-phosphooxyethyl)-thiazole + 4-amino-2-methyl-5-(diphosphooxymethyl)pyrimidine + H(+) = thiamine phosphate + diphosphate. It functions in the pathway cofactor biosynthesis; thiamine diphosphate biosynthesis; thiamine phosphate from 4-amino-2-methyl-5-diphosphomethylpyrimidine and 4-methyl-5-(2-phosphoethyl)-thiazole: step 1/1. Functionally, condenses 4-methyl-5-(beta-hydroxyethyl)thiazole monophosphate (THZ-P) and 2-methyl-4-amino-5-hydroxymethyl pyrimidine pyrophosphate (HMP-PP) to form thiamine monophosphate (TMP). The polypeptide is Thiamine-phosphate synthase (Shouchella clausii (strain KSM-K16) (Alkalihalobacillus clausii)).